Reading from the N-terminus, the 618-residue chain is ADP,ATP carrier protein 2, chloroplastic (618 aa).

A chloroplast-targeting transit peptide spans 1 to 76 (MEGLIQTRGI…KERSRGFICK (76 aa)). Ala77 is modified (N-acetylalanine). Transmembrane regions (helical) follow at residues 110–130 (LKKI…YTIL), 148–168 (IIPF…MLLY), 179–199 (ALFY…GFVM), 237–257 (LFYV…FWGF), 270–289 (FYPL…GRTV), 312–332 (AMMS…WWVN), 368–388 (LATL…TWKS), 401–421 (SAFM…MMLL), 441–461 (VLLL…PFAP), 464–484 (AKLG…QNIF), and 542–562 (LANS…AWLA). Residues 586 to 618 (RASSVKIPVVSQEDAPSGETTSQLSEKSTPTGI) are disordered. Residues 603–618 (GETTSQLSEKSTPTGI) are compositionally biased toward polar residues.

Belongs to the ADP/ATP translocase tlc (TC 2.A.12.2) family.

The protein localises to the plastid. It localises to the chloroplast membrane. This is ADP,ATP carrier protein 2, chloroplastic (AATP2) from Arabidopsis thaliana (Mouse-ear cress).